A 141-amino-acid chain; its full sequence is Hemoglobin subunit alpha-D (141 aa).

Residues methionine 1 to arginine 141 enclose the Globin domain. 2 residues coordinate heme b: histidine 58 and histidine 87.

It belongs to the globin family. Heterotetramer of two alpha-D chains and two beta chains. Red blood cells.

In terms of biological role, involved in oxygen transport from the lung to the various peripheral tissues. The chain is Hemoglobin subunit alpha-D (HBAD) from Anser anser anser (Western greylag goose).